Reading from the N-terminus, the 428-residue chain is Enolase (428 aa).

Residue Gln163 coordinates (2R)-2-phosphoglycerate. The Proton donor role is filled by Glu205. 3 residues coordinate Mg(2+): Asp242, Glu285, and Asp312. (2R)-2-phosphoglycerate-binding residues include Lys337, Arg366, Ser367, and Lys388. Lys337 serves as the catalytic Proton acceptor.

It belongs to the enolase family. Requires Mg(2+) as cofactor.

Its subcellular location is the cytoplasm. The protein resides in the secreted. It localises to the cell surface. It carries out the reaction (2R)-2-phosphoglycerate = phosphoenolpyruvate + H2O. Its pathway is carbohydrate degradation; glycolysis; pyruvate from D-glyceraldehyde 3-phosphate: step 4/5. Catalyzes the reversible conversion of 2-phosphoglycerate (2-PG) into phosphoenolpyruvate (PEP). It is essential for the degradation of carbohydrates via glycolysis. The sequence is that of Enolase from Neisseria meningitidis serogroup A / serotype 4A (strain DSM 15465 / Z2491).